A 341-amino-acid polypeptide reads, in one-letter code: uncharacterized protein (341 aa).

Active-site residues include Ser111, Asp247, and His275.

Belongs to the DmpD/TodF/XylF esterase family.

This is an uncharacterized protein from Mycobacterium bovis (strain ATCC BAA-935 / AF2122/97).